The primary structure comprises 260 residues: PsbP domain-containing protein 4, chloroplastic (260 aa).

Belongs to the PsbP family.

It is found in the plastid. The protein resides in the chloroplast thylakoid lumen. The sequence is that of PsbP domain-containing protein 4, chloroplastic (PPD4) from Arabidopsis thaliana (Mouse-ear cress).